Consider the following 142-residue polypeptide: Transcription antitermination protein NusB (142 aa).

It belongs to the NusB family.

Functionally, involved in transcription antitermination. Required for transcription of ribosomal RNA (rRNA) genes. Binds specifically to the boxA antiterminator sequence of the ribosomal RNA (rrn) operons. This Thermobifida fusca (strain YX) protein is Transcription antitermination protein NusB.